The sequence spans 687 residues: Adhesion G-protein coupled receptor G1 (687 aa).

The first 25 residues, 1–25 (MTAQSLLQTTLFLLSLLFLVQGAHG), serve as a signal peptide directing secretion. Residue 26 to 33 (RGHREDFR) coordinates heparin. The Extracellular segment spans residues 26–402 (RGHREDFRFC…VEVDAVHKHY (377 aa)). Cystine bridges form between Cys-35/Cys-91 and Cys-121/Cys-177. Asn-39, Asn-148, and Asn-171 each carry an N-linked (GlcNAc...) asparagine glycan. 190–200 (LKHPQKASRRP) serves as a coordination point for heparin. A GAIN-B domain is found at 224–395 (DTVSFEEDRI…AVLMVSSVEV (172 aa)). N-linked (GlcNAc...) asparagine glycans are attached at residues Asn-234, Asn-303, Asn-324, and Asn-341. 2 cysteine pairs are disulfide-bonded: Cys-346–Cys-377 and Cys-366–Cys-379. Positions 346–395 (CVFWVEDPTLSSPGHWSSAGCETVRRETQTSCLCNHLTYFAVLMVSSVEV) are GPS. Residues 384 to 397 (YFAVLMVSSVEVDA) are stachel. The helical transmembrane segment at 403–423 (LSLLSYVGCVVSALACVVTIA) threads the bilayer. The Cytoplasmic segment spans residues 424-442 (AYLCSRRKPRDYTIKVHMN). The chain crosses the membrane as a helical span at residues 443–463 (LLLAVFLLDTSFLLSEPVALT). Over 464-470 (GSEAGCR) the chain is Extracellular. Residues 471 to 491 (ASAIFLHFSLLACLSWMGLEG) traverse the membrane as a helical segment. Topologically, residues 492 to 512 (YNLYRLVVEVFGTYVPGYLLK) are cytoplasmic. Residues 513–533 (LSAMGWGFPIFLVTLVALVDV) traverse the membrane as a helical segment. Residues 534–570 (DNYGPIILAVHRTPEGVIYPSMCWIRDSLVSYITNLG) are Extracellular-facing. The helical transmembrane segment at 571-591 (LFSLVFLFNMAMLATMVVQIL) threads the bilayer. The Cytoplasmic segment spans residues 592–603 (RLRPHTQKWSHV). A helical membrane pass occupies residues 604 to 624 (LTLLGLSLVLGLPWALIFFSF). Topologically, residues 625–630 (ASGTFQ) are extracellular. The helical transmembrane segment at 631-651 (LVILYLFSIITSFQGFLIFIW) threads the bilayer. Topologically, residues 652 to 687 (YWSMRLQARGGPSPLKSNSDSARLPISSGSTSSSRI) are cytoplasmic. Positions 664-687 (SPLKSNSDSARLPISSGSTSSSRI) are disordered. Over residues 678–687 (SSGSTSSSRI) the composition is skewed to low complexity.

It belongs to the G-protein coupled receptor 2 family. LN-TM7 subfamily. In terms of assembly, heterodimer of 2 chains generated by proteolytic processing; the large extracellular N-terminal fragment (ADGRG1 NT) and the membrane-bound C-terminal fragment (ADGRG1-CT) predominantly remain associated and non-covalently linked. ADGRG1 NT self-associates in a trans-trans manner; the homophilic interaction enhances receptor signaling. Interacts with TGM2. Interacts with heparin; leading to the reduction of ADGRG1 shedding. Interacts with COL3A1. Part of a GPCR-tetraspanin complex at least consisting of ADGRG1, CD81, eventually CD9, and GNA11 in which CD81 is enhancing the association of ADGRG1 with GNA11. Post-translationally, autoproteolytically cleaved into 2 fragments; the large extracellular N-terminal fragment (ADGRG1 NT) and the membrane-bound C-terminal fragment (ADGRG1 CT) predominantly remain associated and non-covalently linked. Shedding to yield the secreted ADGRG1 N-terminal fragment seems to involve metalloprotease(s). In terms of processing, ubiquitinated. Undergoes polyubiquitination upon activation.

The protein resides in the cell membrane. It is found in the secreted. The protein localises to the membrane raft. With respect to regulation, forms a heterodimer of 2 chains generated by proteolytic processing that remain associated through non-covalent interactions mediated by the GAIN-B domain. In the inactivated receptor, the Stachel sequence (also named stalk) is embedded in the GAIN-B domain, where it adopts a beta-strand conformation. On activation, the Stachel moves into the 7 transmembrane region and adopts a twisted hook-shaped configuration that forms contacts within the receptor, leading to coupling of a G-alpha protein, which activates signaling. The cleaved GAIN-B and N-terminal domains can then dissociate from the rest of the receptor. Functionally, adhesion G-protein coupled receptor (aGPCR) for steroid hormone 17alpha-hydroxypregnenolone (17-OH), which is involved in cell adhesion and cell-cell interactions. Ligand binding causes a conformation change that triggers signaling via guanine nucleotide-binding proteins (G proteins) and modulates the activity of downstream effectors, such as RhoA pathway. ADGRG1 is coupled to G(12) and/or G(13) G proteins (GNA12 and GNA13, respectively) and mediates the activation Rho small GTPases. Acts as a potent suppressor of ferroptosis: binding to 17-OH-binding initiates signaling that down-regulates CD36 and alleviates ferroptosis-induced liver injury. Ligand-binding also induces cell adhesion activity via association with proteins such as collagen III/COL3A1 and TGM2. Mediates cell matrix adhesion in developing neurons and hematopoietic stem cells. Involved in cortical development, specifically in maintenance of the pial basement membrane integrity and in cortical lamination: association with COL3A1 in the developing brain inhibits neuronal migration via activation of the RhoA pathway. Together with TGM2, acts as a regulator of myelination and myelin repair in oligodendrocyte precursor cells. Acts as a hemostatic sensor of shear force: G protein-coupled receptor signaling is activated in response to shear force in platelets, promoting G(13) G protein signaling, and platelet shape change and aggregation in a COL3A1-dependent manner. Acts as an inhibitor of VEGFA production thereby inhibiting angiogenesis through a signaling pathway mediated by PRKCA. Plays a role in the maintenance of hematopoietic stem cells in bone marrow niche. Plays an essential role in testis development. The chain is Adhesion G-protein coupled receptor G1 (ADGRG1) from Pan troglodytes (Chimpanzee).